We begin with the raw amino-acid sequence, 1049 residues long: Toll-like receptor 7 (1049 aa).

Positions 1-26 (MVFPMWTLKRQILILFNIILISKLLG) are cleaved as a signal peptide. The Extracellular portion of the chain corresponds to 27–839 (ARWFPKTLPC…LYTCELDLTN (813 aa)). LRR repeat units lie at residues 43 to 64 (PKNH…GGIP), 65 to 87 (TNTT…SFHR), 110 to 126 (NMCI…FSGL), 127 to 149 (TYLK…LPPS), 151 to 170 (QLLS…NLTE), and 171 to 195 (LANI…SYSI). N-linked (GlcNAc...) asparagine glycans are attached at residues asparagine 66 and asparagine 69. Asparagine 167 carries N-linked (GlcNAc...) asparagine glycosylation. N-linked (GlcNAc...) asparagine glycans are attached at residues asparagine 202 and asparagine 215. LRR repeat units follow at residues 203 to 226 (LTKL…LPST), 228 to 247 (TELY…DFNN), 248 to 275 (LNQL…PCKN), 289 to 312 (LTEL…WFKN), 314 to 337 (NKLQ…KFLH), 339 to 368 (LPSL…AFSS), 369 to 392 (LKSL…NLSP), 396 to 419 (LQNL…MFKQ), and 421 to 443 (KRLK…SEVG). N-linked (GlcNAc...) asparagine glycosylation occurs at asparagine 361. A glycan (N-linked (GlcNAc...) asparagine) is linked at asparagine 413. A glycan (N-linked (GlcNAc...) asparagine) is linked at asparagine 488. 4 LRR repeats span residues 492–515 (YKYG…DFQH), 516–540 (LSFL…EFQP), 541–564 (LAEL…AFEE), and 566–588 (HKLE…ITHM). Asparagine 523 and asparagine 534 each carry an N-linked (GlcNAc...) asparagine glycan. Asparagine 590 carries an N-linked (GlcNAc...) asparagine glycan. 8 LRR repeats span residues 595–618 (LKVL…TMES), 619–644 (ESLR…RYLQ), 649–672 (LLKL…VFDG), 674–697 (PPNL…KLQC), 698–721 (LKNL…LSNC), 723–745 (RSLK…FLQD), 746–769 (AFQL…SFPE), and 772–795 (LNNL…VWFV). Asparagine 679 and asparagine 720 each carry an N-linked (GlcNAc...) asparagine glycan. Asparagine 799 is a glycosylation site (N-linked (GlcNAc...) asparagine). Residues 840–860 (LILFSLSISVSLFLMVMMTAS) form a helical membrane-spanning segment. The Cytoplasmic portion of the chain corresponds to 861–1049 (HLYFWDVWYI…AYSQVFKETV (189 aa)). In terms of domain architecture, TIR spans 889-1033 (CCYDAFIVYD…YFWQCLKNAL (145 aa)).

This sequence belongs to the Toll-like receptor family. As to quaternary structure, homodimer. Interacts with MYD88 via their respective TIR domains. Interacts with UNC93B1. Interacts with SMPDL3B. As to expression, detected in brain, placenta, spleen, stomach, small intestine, lung and in plasmacytoid pre-dendritic cells. Expressed in peripheral mononuclear blood cells.

Its subcellular location is the endoplasmic reticulum membrane. It is found in the endosome. The protein resides in the lysosome. It localises to the cytoplasmic vesicle. The protein localises to the phagosome. Activated by guanosine analogs including deoxyguanosine, 7-thia-8-oxoguanosine or 7-deazaguanosine in a RNA-independent manner. Activated by imiquimod. Its function is as follows. Endosomal receptor that plays a key role in innate and adaptive immunity. Controls host immune response against pathogens through recognition of uridine-containing single strand RNAs (ssRNAs) of viral origin or guanosine analogs. Upon binding to agonists, undergoes dimerization that brings TIR domains from the two molecules into direct contact, leading to the recruitment of TIR-containing downstream adapter MYD88 through homotypic interaction. In turn, the Myddosome signaling complex is formed involving IRAK4, IRAK1, TRAF6, TRAF3 leading to activation of downstream transcription factors NF-kappa-B and IRF7 to induce pro-inflammatory cytokines and interferons, respectively. In plasmacytoid dendritic cells, RNASET2 endonuclease cooperates with PLD3 or PLD4 5'-&gt;3' exonucleases to process RNA and release 2',3'-cyclic guanosine monophosphate (2',3'-cGMP) and cytidine-rich RNA fragments that occupy TLR7 ligand-binding pockets and trigger a signaling-competent state. This is Toll-like receptor 7 from Homo sapiens (Human).